The following is a 505-amino-acid chain: ATP synthase subunit alpha (505 aa).

169–176 (GDRQTGKT) is a binding site for ATP.

The protein belongs to the ATPase alpha/beta chains family. In terms of assembly, F-type ATPases have 2 components, CF(1) - the catalytic core - and CF(0) - the membrane proton channel. CF(1) has five subunits: alpha(3), beta(3), gamma(1), delta(1), epsilon(1). CF(0) has three main subunits: a(1), b(2) and c(9-12). The alpha and beta chains form an alternating ring which encloses part of the gamma chain. CF(1) is attached to CF(0) by a central stalk formed by the gamma and epsilon chains, while a peripheral stalk is formed by the delta and b chains.

It is found in the cell membrane. The catalysed reaction is ATP + H2O + 4 H(+)(in) = ADP + phosphate + 5 H(+)(out). Produces ATP from ADP in the presence of a proton gradient across the membrane. The alpha chain is a regulatory subunit. The chain is ATP synthase subunit alpha from Alkaliphilus metalliredigens (strain QYMF).